A 230-amino-acid polypeptide reads, in one-letter code: Orotidine 5'-phosphate decarboxylase (230 aa).

Substrate is bound by residues D11, K34, 61–70 (DLKLHDIPNT), T117, R179, Q188, G208, and R209. K63 functions as the Proton donor in the catalytic mechanism.

Belongs to the OMP decarboxylase family. Type 1 subfamily. Homodimer.

It catalyses the reaction orotidine 5'-phosphate + H(+) = UMP + CO2. It participates in pyrimidine metabolism; UMP biosynthesis via de novo pathway; UMP from orotate: step 2/2. Its function is as follows. Catalyzes the decarboxylation of orotidine 5'-monophosphate (OMP) to uridine 5'-monophosphate (UMP). This is Orotidine 5'-phosphate decarboxylase from Streptococcus equi subsp. zooepidemicus (strain H70).